Consider the following 350-residue polypeptide: Small ribosomal subunit biogenesis GTPase RsgA (350 aa).

The segment covering 1-17 has biased composition (polar residues); sequence MSKNKLSKGQQRRVNAN. The tract at residues 1 to 27 is disordered; that stretch reads MSKNKLSKGQQRRVNANHQRRLKTSAE. One can recognise a CP-type G domain in the interval 104-273; sequence TSVLTRPDFY…VIDSPGVREF (170 aa). GTP contacts are provided by residues 160–163 and 214–222; these read NKID and GQSGVGKSS. The Zn(2+) site is built by Cys-297, Cys-302, His-304, and Cys-310.

This sequence belongs to the TRAFAC class YlqF/YawG GTPase family. RsgA subfamily. In terms of assembly, monomer. Associates with 30S ribosomal subunit, binds 16S rRNA. Zn(2+) is required as a cofactor.

The protein resides in the cytoplasm. Functionally, one of several proteins that assist in the late maturation steps of the functional core of the 30S ribosomal subunit. Helps release RbfA from mature subunits. May play a role in the assembly of ribosomal proteins into the subunit. Circularly permuted GTPase that catalyzes slow GTP hydrolysis, GTPase activity is stimulated by the 30S ribosomal subunit. The chain is Small ribosomal subunit biogenesis GTPase RsgA from Salmonella dublin (strain CT_02021853).